Consider the following 2006-residue polypeptide: Supporter of activation of yellow protein (2006 aa).

8 disordered regions span residues 1 to 208, 313 to 347, 458 to 564, 744 to 794, 821 to 916, 929 to 1029, 1044 to 1082, and 1099 to 1196; these read MNDL…RRVE, MPAK…SSLA, EEKP…AQSQ, DTQD…DPAR, DLEG…KSRR, VSVG…NNNS, CSSS…SDPL, and QQLR…SAVA. Residues 10 to 60 show a composition bias toward low complexity; it reads VAATSSSGSESGTAVESAAATSTAGSAGAAGRPQSNCSANSNAKSVAASST. Residues 67-81 are compositionally biased toward polar residues; that stretch reads VSSTSSPAQRDQQLN. Residues 118-128 show a composition bias toward pro residues; that stretch reads SPPPTLPPPTT. The span at 129-168 shows a compositional bias: low complexity; sequence PCDDAPSTTGASASASSASGEAPSAASAAGAAGGPMAATA. The segment covering 189 to 199 has biased composition (polar residues); sequence ANPNSNANESQ. Residues 321–347 are compositionally biased toward low complexity; it reads LSSLSPASASSSSASSSSSSSSSSSLA. Over residues 485 to 494 the composition is skewed to polar residues; sequence GGESNSSSQE. The span at 525-534 shows a compositional bias: basic and acidic residues; it reads SLSKEHDPKI. Residues 543–563 show a composition bias toward low complexity; sequence ASNGIASGGSKASKASKSAQS. The span at 744-758 shows a compositional bias: basic and acidic residues; the sequence is DTQDNNNENHLKRTN. 2 stretches are compositionally biased toward polar residues: residues 759-769 and 828-844; these read SEGNESPSSRL and PPTQ…NGAL. The segment covering 861-870 has biased composition (pro residues); that stretch reads PATPQPPPVA. 2 stretches are compositionally biased toward basic and acidic residues: residues 936-945 and 963-972; these read ADMKAKEKES and ESPKTRDHRP. 2 stretches are compositionally biased toward low complexity: residues 978-990 and 1018-1029; these read RTTT…LQPT and SSESESNNNNNS. Over residues 1053 to 1080 the composition is skewed to polar residues; that stretch reads GAAANQQVIGGSGSSSMLPPTTILSSSD. Positions 1103–1112 are enriched in low complexity; it reads SSRPSSISCG. Residues 1147-1158 show a composition bias toward basic residues; sequence GRGRGRRSRGGR. Positions 1161–1173 are enriched in low complexity; that stretch reads GSSSVDRAVSVGG. The segment at 1340-1573 is SAY; it reads MIQEQVALYL…PPTDLMAQLL (234 aa). A disordered region spans residues 1579–1685; it reads AVGSDEIKTS…AGSEDEDGNE (107 aa). Composition is skewed to low complexity over residues 1627–1652 and 1660–1677; these read TASS…SSDT and FSST…SGAG. The segment at 1694–1751 adopts a PHD-type 1; degenerate zinc-finger fold; that stretch reads TCGVCLRSQHRNARDMPEAFIRCYTCRKRVHPSCVDMPPRMVGRVRNYNWQCAGCKCC. Residues 1753–1796 form a PHD-type 2; degenerate zinc finger; it reads KCRSSQRPGKMLYCEQCDRGYHIYCLGLRTVPDGRWSCERCCFC. The disordered stretch occupies residues 1887–1911; it reads TSAQTDDSPMPSPGLTTNGGRALSP.

Belongs to the SAYP family. Widely expressed. Highly expressed in ovary. Expressed in nursing cells and growing oocytes at all stages of development and accumulates in mature oocytes. Expressed in the nuclei of syncytium blastoderm of early embryos and in the nuclei of different tissues of late embryos, larvae, and adults.

The protein resides in the nucleus. It is found in the cytoplasm. Its subcellular location is the chromosome. Essential transcription regulator during early development. Coactivates transcription of some euchromatin genes and repress transcription in of euchromatin genes translocated to heterochromatin. The protein is Supporter of activation of yellow protein (e(y)3) of Drosophila melanogaster (Fruit fly).